A 196-amino-acid chain; its full sequence is Chromophore lyase CpcT/CpeT (196 aa).

Belongs to the CpcT/CpeT biliprotein lyase family.

Functionally, covalently attaches a chromophore to Cys residue(s) of phycobiliproteins. This Synechocystis sp. (strain ATCC 27184 / PCC 6803 / Kazusa) protein is Chromophore lyase CpcT/CpeT.